The following is a 1093-amino-acid chain: Electroneutral sodium bicarbonate exchanger 1 (1093 aa).

Disordered regions lie at residues 1–25 (MPAA…AVVD) and 55–95 (PLGR…HDTP). Over 1–478 (MPAAGSNEPD…DYRDALSLQC (478 aa)) the chain is Extracellular. Basic residues predominate over residues 59–77 (QSHRHHRTHGQKHRRRGRG). Positions 167 and 169 each coordinate Zn(2+). The VTVLP; mediates dimerization motif lies at 340 to 344 (LFILL). The helical transmembrane segment at 479–499 (LASFLFLYCACMSPVITFGGL) threads the bilayer. Residues 500–523 (LGEATEGRISAIESLFGASMTGIA) are Cytoplasmic-facing. Residues 524–544 (YSLFAGQALTILGSTGPVLVF) form a helical membrane-spanning segment. Topologically, residues 545–565 (EKILFKFCKDYALSYLSLRAC) are extracellular. The chain crosses the membrane as a helical span at residues 566-586 (IGLWTAFLCIVLVATDASSLV). The Cytoplasmic portion of the chain corresponds to 587–595 (CYITRFTEE). A helical transmembrane segment spans residues 596 to 616 (AFASLICIIFIYEAIEKLIHL). The Extracellular portion of the chain corresponds to 617-687 (AETYPIHMHS…EFMGSACGHH (71 aa)). 2 cysteine pairs are disulfide-bonded: Cys-636-Cys-684 and Cys-638-Cys-672. Residue Asn-646 is glycosylated (N-linked (GlcNAc) asparagine). The chain crosses the membrane as a helical span at residues 688–708 (GPYTPDVLFWSCILFFTTFIL). The Cytoplasmic portion of the chain corresponds to 709-731 (SSTLKTFKTSRYFPTRVRSMVSD). A helical membrane pass occupies residues 732 to 752 (FAVFLTIFTMVIIDFLIGVPS). Residues 753 to 778 (PKLQVPSVFKPTRDDRGWIINPIGPN) are Extracellular-facing. Residues 779 to 799 (PWWTVIAAIIPALLCTILIFM) traverse the membrane as a helical segment. Topologically, residues 800 to 824 (DQQITAVIINRKEHKLKKGCGYHLD) are cytoplasmic. A helical transmembrane segment spans residues 825–845 (LLMVAIMLGVCSIMGLPWFVA). Residues 846–881 (ATVLSITHVNSLKLESECSAPGEQPKFLGIREQRVT) are Extracellular-facing. Residues 882-902 (GLMIFVLMGCSVFMTAILKFI) form a helical membrane-spanning segment. The Cytoplasmic portion of the chain corresponds to 903–904 (PM). The helical transmembrane segment at 905–925 (PVLYGVFLYMGVSSLQGIQFF) threads the bilayer. Residues 926–962 (DRLKLFGMPAKHQPDFIYLRHVPLRKVHLFTLIQLTC) lie on the Extracellular side of the membrane. The chain crosses the membrane as a helical span at residues 963–983 (LVLLWVIKASPAAIVFPMMVL). The Cytoplasmic segment spans residues 984–1093 (ALVFVRKVMD…GNAKEKSLFN (110 aa)). A coiled-coil region spans residues 1010–1036 (ESKKKKLDDAKKKAKEEEEAEKMLEIG).

This sequence belongs to the anion exchanger (TC 2.A.31) family. In terms of assembly, homodimer. As to expression, expressed in the pyramidal cells of the hippocampus (at protein level). Highly expressed in all major regions of the brain, spinal column and in testis, and moderate levels in trachea, thyroid and medulla region of kidney. Low expression levels observed in pancreas and kidney cortex. In terms of tissue distribution, expressed in the brain. Expressed in the brain, heart and kidney.

Its subcellular location is the apical cell membrane. The protein localises to the basolateral cell membrane. The protein resides in the cytoplasmic vesicle. It localises to the secretory vesicle. It is found in the synaptic vesicle membrane. Its subcellular location is the cell membrane. It carries out the reaction 2 hydrogencarbonate(out) + chloride(in) + Na(+)(out) = 2 hydrogencarbonate(in) + chloride(out) + Na(+)(in). With respect to regulation, activity is inhibited by 4,4'-Di-isothiocyanatostilbene-2,2'-disulfonic acid (DIDS - an inhibitor of several anion channels and transporters). Activity is inhibited by 4,4'-Di-isothiocyanatostilbene-2,2'-disulfonic acid (DIDS - an inhibitor of several anion channels and transporters). Zinc-binding negatively regulates its activity. Functionally, mediates electroneutral sodium- and carbonate-dependent chloride-HCO3(-) exchange with a Na(+):HCO3(-) stoichiometry of 2:1. Plays a major role in pH regulation in neurons. Mediates sodium reabsorption in the renal cortical collecting ducts. This chain is Electroneutral sodium bicarbonate exchanger 1, found in Homo sapiens (Human).